The following is a 267-amino-acid chain: Hydroxyethylthiazole kinase 2 (267 aa).

Methionine 41 contacts substrate. ATP-binding residues include lysine 116 and threonine 166. Glycine 193 is a substrate binding site.

The protein belongs to the Thz kinase family. Mg(2+) serves as cofactor.

It catalyses the reaction 5-(2-hydroxyethyl)-4-methylthiazole + ATP = 4-methyl-5-(2-phosphooxyethyl)-thiazole + ADP + H(+). Its pathway is cofactor biosynthesis; thiamine diphosphate biosynthesis; 4-methyl-5-(2-phosphoethyl)-thiazole from 5-(2-hydroxyethyl)-4-methylthiazole: step 1/1. Catalyzes the phosphorylation of the hydroxyl group of 4-methyl-5-beta-hydroxyethylthiazole (THZ). The sequence is that of Hydroxyethylthiazole kinase 2 from Streptococcus pneumoniae (strain 70585).